The following is a 397-amino-acid chain: Odorant receptor 98a (397 aa).

Residues 1–43 (MLFNYLRKPNPTNLLTSPDSFRYFEYGMFCMGWHTPATHKIIY) lie on the Cytoplasmic side of the membrane. A helical transmembrane segment spans residues 44–64 (YITSCLIFAWCAVYLPIGIII). Over 65–77 (SFKTDINTFTPNE) the chain is Extracellular. The helical transmembrane segment at 78 to 98 (LLTVMQLFFNSVGMPFKVLFF) threads the bilayer. Residues 99–138 (NLYISGFYKAKKLLSEMDKRCTTLKERVEVHQGVVRCNKA) lie on the Cytoplasmic side of the membrane. Residues 139 to 159 (YLIYQFIYTAYTISTFLSAAL) form a helical membrane-spanning segment. Residues 160–192 (SGKLPWRIYNPFVDFRESRSSFWKAALNETALM) lie on the Extracellular side of the membrane. N-linked (GlcNAc...) asparagine glycosylation is present at asparagine 187. The helical transmembrane segment at 193–213 (LFAVTQTLMSDIYPLLYGLIL) threads the bilayer. Topologically, residues 214–266 (RVHLKLLRLRVESLCTDSGKSDAENEQDLIKCIKDHNLIIDYAAAIRPAVTRT) are cytoplasmic. A helical membrane pass occupies residues 267–287 (IFVQFLLIGICLGLSMINLLF). At 288-293 (FADIWT) the chain is on the extracellular side. The helical transmembrane segment at 294–314 (GLATVAYINGLMVQTFPFCFV) threads the bilayer. Residues 315 to 354 (CDLLKKDCELLVSAIFHSNWINSSRSYKSSLRYFLKNAQK) are Cytoplasmic-facing. Residues 355–375 (SIAFTAGSIFPISTGSNIKVA) form a helical membrane-spanning segment. Over 376–397 (KLAFSVVTFVNQLNIADRLTKN) the chain is Extracellular.

The protein belongs to the insect chemoreceptor superfamily. Heteromeric odorant receptor channel (TC 1.A.69) family. Or2a subfamily. Interacts with Orco. Complexes exist early in the endomembrane system in olfactory sensory neurons (OSNs), coupling these complexes to the conserved ciliary trafficking pathway. Expressed in olfactory sensory neurons in the antenna.

The protein localises to the cell membrane. In terms of biological role, odorant receptor which mediates acceptance or avoidance behavior, depending on its substrates. The odorant receptor repertoire encodes a large collection of odor stimuli that vary widely in identity, intensity, and duration. May form a complex with Orco to form odorant-sensing units, providing sensitive and prolonged odorant signaling and calcium permeability. The sequence is that of Odorant receptor 98a (Or98a) from Drosophila melanogaster (Fruit fly).